Reading from the N-terminus, the 563-residue chain is MGLQARFLGLLALVIAGKCTHSPEPDQRWMLPPGWVSLGRVDPEEELSLTFALKQQNLDRLSELVQAVSDPSSPRYGKYLTLEDVAELVQPSPLTLRTVQKWLLAAGARDCHSVTTQDFLTCWLSVRQAELLLPGAEFHRYVGGPAKTHIIRSPHPYQLPQALAPHVDLVAGLHRFPPLSSPRQRPEPQGVGPVGLHLGVTPSVLRQRYNLTARDVGSGTTNNSQACAQFLEQYFHNSDLTEFMRLFGSSFAHQASVARVVGKQGRGRAGIEASLDVEYLMSAGANISTWVYSSPGRHEAQEPFLQWLLLLSNESSLPHVHTVSYGDDEDSLSSVYIQRVNTEFMKAAARGLTLLFASGDTGAGCWSVSGRHKFRPSFPASSPYVTTVGGTSFKNPFLVTNEVVDYISGGGFSNVFPQPSYQEEAVAQFLKSSSHLPPSSYFNASGRAYPDVAALSDGYWVVSNMVPIPWVSGTSASTPVFGGILSLINEHRLLNGRPPLGFLNPRLYQQHGAGLFDVTHGCHESCLNEEVEGQGFCSGPGWDPVTGWGTPNFPALLKTLLNP.

A signal peptide spans 1–19 (MGLQARFLGLLALVIAGKC). The propeptide at 20-195 (THSPEPDQRW…PEPQGVGPVG (176 aa)) is removed in mature form. Cys-111 and Cys-122 are joined by a disulfide. One can recognise a Peptidase S53 domain in the interval 199-563 (GVTPSVLRQR…PALLKTLLNP (365 aa)). N-linked (GlcNAc...) asparagine glycans are attached at residues Asn-210 and Asn-222. Catalysis depends on charge relay system residues Glu-272 and Asp-276. Asn-286, Asn-313, and Asn-443 each carry an N-linked (GlcNAc...) asparagine glycan. 2 disulfides stabilise this stretch: Cys-365/Cys-526 and Cys-522/Cys-537. Ser-475 (charge relay system) is an active-site residue. 2 residues coordinate Ca(2+): Asp-517 and Val-518. Positions 539, 541, and 543 each coordinate Ca(2+).

In terms of assembly, monomer. Interacts with CLN5. Interacts with CLN3. Ca(2+) is required as a cofactor. Activated by autocatalytic proteolytical processing upon acidification. N-glycosylation is required for processing and activity.

The protein localises to the lysosome. It localises to the melanosome. The catalysed reaction is Release of an N-terminal tripeptide from a polypeptide, but also has endopeptidase activity.. Lysosomal serine protease with tripeptidyl-peptidase I activity. May act as a non-specific lysosomal peptidase which generates tripeptides from the breakdown products produced by lysosomal proteinases. Requires substrates with an unsubstituted N-terminus. The polypeptide is Tripeptidyl-peptidase 1 (Tpp1) (Rattus norvegicus (Rat)).